The following is a 215-amino-acid chain: Protein Thf1 (215 aa).

Positions Glu-182–Thr-213 form a coiled coil.

It belongs to the THF1 family.

May be involved in photosynthetic membrane biogenesis. The sequence is that of Protein Thf1 from Synechococcus sp. (strain CC9605).